Reading from the N-terminus, the 282-residue chain is MILIDGKSLSKDLKERLVTQVQEYKHHTAITPKLVAIIVGNDPASKTYVDSKEKACAQVGIDSQVITLPEHTTESELLELIDQLNNDSSVHAILVQLPLPAHINKNNVIYSIKPEKDVDGFHPTNVGRLQLRDKKCLESCTPKGIMTMLREYGIKTEGAYAVVVGASNVVGKPVSQLLLNAKATVTTCHRFTTDLKSHTTKADILIVAVGKPNFITADMVKEGAVVIDVGINHVDGKIVGDVDFAAVKDKVAAITPVPGGVGPMTITELLYNTFQCAQELNR.

Residues 165-167 (GAS) and Ile231 each bind NADP(+).

The protein belongs to the tetrahydrofolate dehydrogenase/cyclohydrolase family. In terms of assembly, homodimer.

The enzyme catalyses (6R)-5,10-methylene-5,6,7,8-tetrahydrofolate + NADP(+) = (6R)-5,10-methenyltetrahydrofolate + NADPH. The catalysed reaction is (6R)-5,10-methenyltetrahydrofolate + H2O = (6R)-10-formyltetrahydrofolate + H(+). It functions in the pathway one-carbon metabolism; tetrahydrofolate interconversion. Functionally, catalyzes the oxidation of 5,10-methylenetetrahydrofolate to 5,10-methenyltetrahydrofolate and then the hydrolysis of 5,10-methenyltetrahydrofolate to 10-formyltetrahydrofolate. The protein is Bifunctional protein FolD of Francisella tularensis subsp. mediasiatica (strain FSC147).